Reading from the N-terminus, the 287-residue chain is Glutamate racemase (287 aa).

The span at 1-15 (MATKPQDANTTSREA) shows a compositional bias: polar residues. Positions 1 to 25 (MATKPQDANTTSREAITSKADSPPR) are disordered. Substrate-binding positions include 32 to 33 (DS) and 64 to 65 (YG). The active-site Proton donor/acceptor is the C96. Residue 97–98 (NT) coordinates substrate. Residue C208 is the Proton donor/acceptor of the active site. Residue 209–210 (TH) coordinates substrate.

This sequence belongs to the aspartate/glutamate racemases family.

The catalysed reaction is L-glutamate = D-glutamate. The protein operates within cell wall biogenesis; peptidoglycan biosynthesis. Its function is as follows. Provides the (R)-glutamate required for cell wall biosynthesis. The sequence is that of Glutamate racemase from Yersinia pseudotuberculosis serotype O:3 (strain YPIII).